A 290-amino-acid chain; its full sequence is Urease accessory protein UreD (290 aa).

It belongs to the UreD family. In terms of assembly, ureD, UreF and UreG form a complex that acts as a GTP-hydrolysis-dependent molecular chaperone, activating the urease apoprotein by helping to assemble the nickel containing metallocenter of UreC. The UreE protein probably delivers the nickel.

It localises to the cytoplasm. Required for maturation of urease via the functional incorporation of the urease nickel metallocenter. This is Urease accessory protein UreD from Paenarthrobacter aurescens (strain TC1).